A 154-amino-acid chain; its full sequence is Myoglobin (154 aa).

In terms of domain architecture, Globin spans 2–148 (VLTDAEWHLV…FRKDIAAKYK (147 aa)). Histidine 65 serves as a coordination point for nitrite. Residue histidine 65 coordinates O2. Residue threonine 68 is modified to Phosphothreonine. Histidine 94 is a binding site for heme b.

It belongs to the globin family. In terms of assembly, monomeric.

Its subcellular location is the cytoplasm. The protein localises to the sarcoplasm. It catalyses the reaction Fe(III)-heme b-[protein] + nitric oxide + H2O = Fe(II)-heme b-[protein] + nitrite + 2 H(+). It carries out the reaction H2O2 + AH2 = A + 2 H2O. In terms of biological role, monomeric heme protein which primary function is to store oxygen and facilitate its diffusion within muscle tissues. Reversibly binds oxygen through a pentacoordinated heme iron and enables its timely and efficient release as needed during periods of heightened demand. Depending on the oxidative conditions of tissues and cells, and in addition to its ability to bind oxygen, it also has a nitrite reductase activity whereby it regulates the production of bioactive nitric oxide. Under stress conditions, like hypoxia and anoxia, it also protects cells against reactive oxygen species thanks to its pseudoperoxidase activity. The polypeptide is Myoglobin (MB) (Balaenoptera physalus (Fin whale)).